The chain runs to 85 residues: ATP synthase subunit c (85 aa).

2 consecutive transmembrane segments (helical) span residues 19 to 39 and 62 to 82; these read LGAALGAGLAVIGAGIGIGKI and IIAAALVEGVALLALVVCLLV.

Belongs to the ATPase C chain family. As to quaternary structure, F-type ATPases have 2 components, F(1) - the catalytic core - and F(0) - the membrane proton channel. F(1) has five subunits: alpha(3), beta(3), gamma(1), delta(1), epsilon(1). F(0) has three main subunits: a(1), b(2) and c(10-14). The alpha and beta chains form an alternating ring which encloses part of the gamma chain. F(1) is attached to F(0) by a central stalk formed by the gamma and epsilon chains, while a peripheral stalk is formed by the delta and b chains.

The protein resides in the cell inner membrane. Its function is as follows. F(1)F(0) ATP synthase produces ATP from ADP in the presence of a proton or sodium gradient. F-type ATPases consist of two structural domains, F(1) containing the extramembraneous catalytic core and F(0) containing the membrane proton channel, linked together by a central stalk and a peripheral stalk. During catalysis, ATP synthesis in the catalytic domain of F(1) is coupled via a rotary mechanism of the central stalk subunits to proton translocation. Key component of the F(0) channel; it plays a direct role in translocation across the membrane. A homomeric c-ring of between 10-14 subunits forms the central stalk rotor element with the F(1) delta and epsilon subunits. In Bacteroides fragilis (strain ATCC 25285 / DSM 2151 / CCUG 4856 / JCM 11019 / LMG 10263 / NCTC 9343 / Onslow / VPI 2553 / EN-2), this protein is ATP synthase subunit c.